The sequence spans 490 residues: Bifunctional protein HldE (490 aa).

The tract at residues 1–330 (MERKNVESLF…GSMGFQHSDS (330 aa)) is ribokinase. An ATP-binding site is contributed by 205–208 (NRKE). Aspartate 275 is an active-site residue. The segment at 356-490 (FTNGCFDLLH…DKILRAYGEE (135 aa)) is cytidylyltransferase.

In the N-terminal section; belongs to the carbohydrate kinase PfkB family. The protein in the C-terminal section; belongs to the cytidylyltransferase family. As to quaternary structure, homodimer.

It carries out the reaction D-glycero-beta-D-manno-heptose 7-phosphate + ATP = D-glycero-beta-D-manno-heptose 1,7-bisphosphate + ADP + H(+). The catalysed reaction is D-glycero-beta-D-manno-heptose 1-phosphate + ATP + H(+) = ADP-D-glycero-beta-D-manno-heptose + diphosphate. It functions in the pathway nucleotide-sugar biosynthesis; ADP-L-glycero-beta-D-manno-heptose biosynthesis; ADP-L-glycero-beta-D-manno-heptose from D-glycero-beta-D-manno-heptose 7-phosphate: step 1/4. It participates in nucleotide-sugar biosynthesis; ADP-L-glycero-beta-D-manno-heptose biosynthesis; ADP-L-glycero-beta-D-manno-heptose from D-glycero-beta-D-manno-heptose 7-phosphate: step 3/4. Its function is as follows. Catalyzes the phosphorylation of D-glycero-D-manno-heptose 7-phosphate at the C-1 position to selectively form D-glycero-beta-D-manno-heptose-1,7-bisphosphate. In terms of biological role, catalyzes the ADP transfer from ATP to D-glycero-beta-D-manno-heptose 1-phosphate, yielding ADP-D-glycero-beta-D-manno-heptose. This is Bifunctional protein HldE from Geobacter metallireducens (strain ATCC 53774 / DSM 7210 / GS-15).